Consider the following 249-residue polypeptide: DNA polymerase sliding clamp (249 aa).

This sequence belongs to the PCNA family. Homotrimer which circularizes head-to-tail (head is a N-terminus, tail is at C-terminus) to form a toroid. RFC opens the toroid so it can load on DNA. Interacts with both Pol I (pol) and Pol II (polB-polC), with Hel308 (hjm) and with Hjc. Interaction with the C-terminal PIP-box of RfcL may stabilize the toroidal structure.

Its function is as follows. Sliding clamp subunit that acts as a moving platform for DNA processing. Responsible for tethering the catalytic subunit of DNA polymerase to DNA during high-speed replication. Unlike its eukaryotic paralog, loads on circular DNA without the replication factor C (RFC) clamp loader, although RFC greatly increases loading efficiency. Stimulates the ATPase activity of replication factor C (RFC) in the presence of ssDNA. Stimulates the helicase activity of Hel308 and may alter its substrate specificity. The protein is DNA polymerase sliding clamp of Pyrococcus furiosus (strain ATCC 43587 / DSM 3638 / JCM 8422 / Vc1).